The sequence spans 381 residues: Spindlin interactor and repressor of chromatin-binding protein (381 aa).

The disordered stretch occupies residues 42–73 (RVTQQEKTPPPRPSPLEAGSDGCEEPKQQVSW). Lys-48 participates in a covalent cross-link: Glycyl lysine isopeptide (Lys-Gly) (interchain with G-Cter in SUMO2). Ser-121 and Ser-148 each carry phosphoserine. 3 disordered regions span residues 144–264 (AEQP…EVRH), 283–320 (QLRGPDSKDSPKDREVAEGGLPRAESPSPAPPPGLRGT), and 339–381 (LQDW…GNGV). Glycyl lysine isopeptide (Lys-Gly) (interchain with G-Cter in SUMO2) cross-links involve residues Lys-189 and Lys-220. The span at 218–228 (RWKEPPGEEPV) shows a compositional bias: basic and acidic residues. Phosphoserine is present on residues Ser-248 and Ser-251. A compositionally biased stretch (basic and acidic residues) spans 287–299 (PDSKDSPKDREVA). Glycyl lysine isopeptide (Lys-Gly) (interchain with G-Cter in SUMO2) cross-links involve residues Lys-290 and Lys-294. Phosphoserine occurs at positions 308 and 310. Lys-374 is covalently cross-linked (Glycyl lysine isopeptide (Lys-Gly) (interchain with G-Cter in SUMO2)).

Interacts with SPIN1, SPIN2A, SPIN2B, SPIN3 and SPIN4. Interacts with TCF7L2 in a SPIN1-dependent manner. Interacts with PARP1; promoting PARP1 ADP-ribosyltransferase activity.

It localises to the nucleus. It is found in the chromosome. Functionally, chromatin protein that stabilizes SPIN1 and enhances its association with histone H3 trimethylated at both 'Lys-4' and 'Lys-9' (H3K4me3K9me3). Positively regulates poly-ADP-ribosylation in response to DNA damage; acts by facilitating PARP1 ADP-ribosyltransferase activity. This is Spindlin interactor and repressor of chromatin-binding protein from Homo sapiens (Human).